We begin with the raw amino-acid sequence, 430 residues long: T-kininogen 1 (430 aa).

Positions 1 to 18 are cleaved as a signal peptide; the sequence is MKLITILLLCSRLLPSLA. A Pyrrolidone carboxylic acid modification is found at Gln19. The region spanning 28 to 131 is the Cystatin kininogen-type 1 domain; sequence CNDETVFQAV…TQICNITPGK (104 aa). 9 cysteine pairs are disulfide-bonded: Cys28/Cys404, Cys83/Cys94, Cys107/Cys125, Cys141/Cys144, Cys205/Cys217, Cys228/Cys247, Cys263/Cys266, Cys327/Cys339, and Cys350/Cys369. A glycan (N-linked (GlcNAc...) asparagine) is linked at Asn82. The region spanning 150-253 is the Cystatin kininogen-type 2 domain; sequence MDSSDLKPVL…SQSCDLYPGD (104 aa). 2 N-linked (GlcNAc...) asparagine glycosylation sites follow: Asn168 and Asn204. The Cystatin kininogen-type 3 domain occupies 272–375; the sequence is VDSPELKEAL…TVRCQALDMM (104 aa). The N-linked (GlcNAc...) asparagine glycan is linked to Asn326. The segment at 411–430 is disordered; that stretch reads SKARAGPAPDHQAEASTVTP.

Post-translationally, as T-kinin is preceded by a Met instead of an Arg or Lys, it is not released from its precursor by either tissue or plasma kallikrein. As to expression, plasma.

The protein resides in the secreted. Its subcellular location is the extracellular space. Functionally, kininogens are plasma glycoproteins with a number of functions: (1) as precursor of the active peptide bradykinin they effect smooth muscle contraction, induction of hypotension and increase of vascular permeability. (2) They play a role in blood coagulation by helping to position optimally prekallikrein and factor XI next to factor XII. (3) They are inhibitor of thiol proteases. The protein is T-kininogen 1 (Map1) of Rattus norvegicus (Rat).